The sequence spans 313 residues: Beta-ketoacyl-[acyl-carrier-protein] synthase III (313 aa).

Active-site residues include Cys112 and His238. The ACP-binding stretch occupies residues 239-243 (QANIR). Residue Asn268 is part of the active site.

The protein belongs to the thiolase-like superfamily. FabH family. In terms of assembly, homodimer.

It is found in the cytoplasm. The catalysed reaction is malonyl-[ACP] + acetyl-CoA + H(+) = 3-oxobutanoyl-[ACP] + CO2 + CoA. It functions in the pathway lipid metabolism; fatty acid biosynthesis. Its function is as follows. Catalyzes the condensation reaction of fatty acid synthesis by the addition to an acyl acceptor of two carbons from malonyl-ACP. Catalyzes the first condensation reaction which initiates fatty acid synthesis and may therefore play a role in governing the total rate of fatty acid production. Possesses both acetoacetyl-ACP synthase and acetyl transacylase activities. Its substrate specificity determines the biosynthesis of branched-chain and/or straight-chain of fatty acids. The sequence is that of Beta-ketoacyl-[acyl-carrier-protein] synthase III from Staphylococcus epidermidis (strain ATCC 35984 / DSM 28319 / BCRC 17069 / CCUG 31568 / BM 3577 / RP62A).